Consider the following 91-residue polypeptide: Protein xpaR7 (91 aa).

The sequence is that of Protein xpaR7 (xpaR7) from Bacillus licheniformis.